A 184-amino-acid polypeptide reads, in one-letter code: Shikimate kinase (184 aa).

17–22 is an ATP binding site; the sequence is GAGKTT. Threonine 21 contacts Mg(2+). Positions 39, 63, and 85 each coordinate substrate. ATP is bound at residue arginine 123. Arginine 142 contacts substrate.

The protein belongs to the shikimate kinase family. As to quaternary structure, monomer. The cofactor is Mg(2+).

Its subcellular location is the cytoplasm. It catalyses the reaction shikimate + ATP = 3-phosphoshikimate + ADP + H(+). It participates in metabolic intermediate biosynthesis; chorismate biosynthesis; chorismate from D-erythrose 4-phosphate and phosphoenolpyruvate: step 5/7. Its function is as follows. Catalyzes the specific phosphorylation of the 3-hydroxyl group of shikimic acid using ATP as a cosubstrate. This is Shikimate kinase from Burkholderia pseudomallei (strain 1710b).